Reading from the N-terminus, the 541-residue chain is Carboxypeptidase Y homolog A (541 aa).

A signal peptide spans methionine 1–valine 17. The propeptide occupies proline 18 to lysine 122. 5 cysteine pairs are disulfide-bonded: cysteine 177/cysteine 416, cysteine 311/cysteine 325, cysteine 335/cysteine 358, cysteine 342/cysteine 351, and cysteine 380/cysteine 386. The N-linked (GlcNAc...) asparagine glycan is linked to asparagine 208. The active site involves serine 264. Residue aspartate 455 is part of the active site. 3 N-linked (GlcNAc...) asparagine glycosylation sites follow: asparagine 485, asparagine 491, and asparagine 506. Histidine 517 is an active-site residue.

This sequence belongs to the peptidase S10 family.

The protein localises to the vacuole. It catalyses the reaction Release of a C-terminal amino acid with broad specificity.. Its function is as follows. Vacuolar carboxypeptidase involved in degradation of small peptides. Digests preferentially peptides containing an aliphatic or hydrophobic residue in P1' position, as well as methionine, leucine or phenylalanine in P1 position of ester substrate. This chain is Carboxypeptidase Y homolog A (cpyA), found in Uncinocarpus reesii (strain UAMH 1704).